Here is a 694-residue protein sequence, read N- to C-terminus: MPEETQTQDQPMEEEEVETFAFQAEIAQLMSLIINTFYSNKEIFLRELISNSSDALDKIRYESLTDPSKLDSGKELHINLIPNKQDRTLTIVDTGIGMTKADLINNLGTIAKSGTKAFMEALQAGADISMIGQFGVGFYSAYLVAEKVTVITKHNDDEQYAWESSAGGSFTVRTDAGEPMGRGTKVVLHLKEDQTEYLEERRIKEIVKKHSQFIGYPITLFVEKERDKEVSDDEAKQPDDKPEIEDVGSDEEEEEKKDGDIDQEELNKTKPIWTRNPDDITNEEYGEFYKSLTNDWEDHLAVKHFSVEGQLEFRALLFVPRRAPFDLFENRKKKNNIKLYVRRVFIMDNCEELIPEYLNFIRGVVDSEDLPLNISREMLQQSKILKVIRKNLVKKCLELFTELAEDKENYKKFYEQFSKNIKLGIHEDSQNRKKLSELLRYYTSASGDEMVSLKDYCTRMKENQKHIYYITGETKDQVANSAFVERLRKHGLEVIYMIEPIDEYCVQQLKEFEGKTLVSVTKEGLELTKFENLCKIMKDILEKKVEKVVVSNRLVTSPCCIVTSTYGWTANMERIMKAQALRDNSTMGYMAAKKHLEVNPDHSIIETLRQKAEADKNDKSVKDLVILLYETALLSSGFSLEDPQTHANRIYRMIKLGLGIDEDDPTADDTAAAVTEEMPPLEGDDDTSRMEEVD.

Phosphothreonine; by PRKDC occurs at positions 5 and 7. Residues 9-236 (DQPMEEEEVE…DKEVSDDEAK (228 aa)) form an interaction with NR3C1 region. Asparagine 51 is a binding site for ATP. Lysine 58 and lysine 84 each carry N6-acetyllysine. 3 residues coordinate ATP: aspartate 93, lysine 112, and phenylalanine 138. A compositionally biased stretch (basic and acidic residues) spans 228–241 (KEVSDDEAKQPDDK). The segment at 228-275 (KEVSDDEAKQPDDKPEIEDVGSDEEEEEKKDGDIDQEELNKTKPIWTR) is disordered. A phosphoserine mark is found at serine 231 and serine 249. Acidic residues predominate over residues 242–255 (PEIEDVGSDEEEEE). Residues 256–268 (KKDGDIDQEELNK) are compositionally biased toward basic and acidic residues. The interaction with NR3C1 stretch occupies residues 258-578 (DGDIDQEELN…TANMERIMKA (321 aa)). Residues 261–582 (IDQEELNKTK…ERIMKAQALR (322 aa)) are interaction with FNIP2 and TSC1. The interaction with FLCN and FNIP1 stretch occupies residues 261–694 (IDQEELNKTK…DDTSRMEEVD (434 aa)). The residue at position 289 (tyrosine 289) is a Phosphotyrosine. Position 376 (arginine 376) interacts with ATP. Lysine 419 is modified (N6-acetyllysine). A Phosphoserine modification is found at serine 429. Lysine 434 carries the post-translational modification N6-acetyllysine. Serine 452 bears the Phosphoserine mark. An N6-acetyllysine modification is found at lysine 465. Tyrosine 468 is subject to Phosphotyrosine. Lysine 547 carries the post-translational modification N6-acetyllysine. S-nitrosocysteine is present on cysteine 560. The segment at 590 to 693 (MAAKKHLEVN…DDDTSRMEEV (104 aa)) is interaction with NR1D1. A Phosphoserine modification is found at serine 603. The required for homodimerization stretch occupies residues 644-694 (QTHANRIYRMIKLGLGIDEDDPTADDTAAAVTEEMPPLEGDDDTSRMEEVD). The disordered stretch occupies residues 662 to 694 (EDDPTADDTAAAVTEEMPPLEGDDDTSRMEEVD). The span at 668-677 (DDTAAAVTEE) shows a compositional bias: low complexity. Positions 685-694 (DDTSRMEEVD) match the TPR repeat-binding motif. The tract at residues 690–694 (MEEVD) is essential for interaction with SMYD3, TSC1 and STIP1/HOP. The essential for interaction with SGTA and TTC1 stretch occupies residues 691 to 694 (EEVD).

Belongs to the heat shock protein 90 family. As to quaternary structure, homodimer. Identified in NR3C1/GCR steroid receptor-chaperone complexes formed at least by NR3C1, HSP90AA1 and a variety of proteins containing TPR repeats such as FKBP4, FKBP5, PPID, PPP5C or STIP1. Forms a complex containing HSP90AA1, TSC1 and TSC2; TSC1 is required to recruit TCS2 to the complex. The closed form interacts (via the middle domain and TPR repeat-binding motif) with co-chaperone TSC1 (via C-terminus). Interacts with TOM34. Interacts with TERT; the interaction, together with PTGES3, is required for correct assembly and stabilization of the TERT holoenzyme complex. Interacts with CHORDC1 and DNAJC7. Interacts with STUB1 and UBE2N; may couple the chaperone and ubiquitination systems. Interacts (via TPR repeat-binding motif) with PPP5C (via TPR repeats); the interaction is direct and activates PPP5C phosphatase activity. Following LPS binding, may form a complex with CXCR4, GDF5 and HSPA8. Interacts with KSR1. Interacts with co-chaperone CDC37 (via C-terminus); the interaction inhibits HSP90AA1 ATPase activity. May interact with NWD1. Interacts with FNIP1 and FNIP2; the interaction inhibits HSP90AA1 ATPase activity. Interacts with co-chaperone AHSA1 (phosphorylated on 'Tyr-223'); the interaction activates HSP90AA1 ATPase activity and results in the dissociation of TSC1 from HSP90AA1. Interacts with FLCN in the presence of FNIP1. Interacts with HSP70, STIP1 and PTGES3. Interacts with SMYD3; this interaction enhances SMYD3 histone-lysine N-methyltransferase. Interacts with SGTA (via TPR repeats). Interacts with TTC1 (via TPR repeats). Interacts with HSF1 in an ATP-dependent manner. Interacts with MET; the interaction suppresses MET kinase activity. Interacts with ERBB2 in an ATP-dependent manner; the interaction suppresses ERBB2 kinase activity. Interacts with HIF1A, KEAP1 and RHOBTB2. Interacts with HSF1; this interaction is decreased in a IER5-dependent manner, promoting HSF1 accumulation in the nucleus, homotrimerization and DNA-binding activities. Interacts with STUB1 and SMAD3. Interacts with HSP90AB1; interaction is constitutive. Interacts with HECTD1 (via N-terminus). Interacts with NR3C1 (via domain NR LBD) and NR1D1 (via domain NR LBD). Interacts with NLPR12. Interacts with PDCL3. Interacts with TOMM70; the interaction is required for preprotein mitochondrial import. Interacts with TOMM70, IRF3 and TBK1; the interactions are direct and mediate the association of TOMM70 with IRF3 and TBK1. Forms a complex with ASL, ASS1 and NOS2; the complex regulates cell-autonomous L-arginine synthesis and citrulline recycling while channeling extracellular L-arginine to nitric oxide synthesis pathway. ISGylated. Post-translationally, S-nitrosylated; negatively regulates the ATPase activity and the activation of eNOS by HSP90AA1. In terms of processing, ubiquitinated via 'Lys-63'-linked polyubiquitination by HECTD1. Ubiquitination promotes translocation into the cytoplasm away from the membrane and secretory pathways.

The protein localises to the nucleus. It is found in the cytoplasm. Its subcellular location is the melanosome. It localises to the cell membrane. The protein resides in the mitochondrion. The enzyme catalyses ATP + H2O = ADP + phosphate + H(+). With respect to regulation, in the resting state, through the dimerization of its C-terminal domain, HSP90 forms a homodimer which is defined as the open conformation. Upon ATP-binding, the N-terminal domain undergoes significant conformational changes and comes in contact to form an active closed conformation. After HSP90 finishes its chaperoning tasks of assisting the proper folding, stabilization and activation of client proteins under the active state, ATP molecule is hydrolyzed to ADP which then dissociates from HSP90 and directs the protein back to the resting state. Co-chaperone TSC1 promotes ATP binding and inhibits HSP90AA1 ATPase activity. Binding to phosphorylated AHSA1 promotes HSP90AA1 ATPase activity. Inhibited by geldanamycin, Ganetespib (STA-9090) and SNX-2112. In terms of biological role, molecular chaperone that promotes the maturation, structural maintenance and proper regulation of specific target proteins involved for instance in cell cycle control and signal transduction. Undergoes a functional cycle that is linked to its ATPase activity which is essential for its chaperone activity. This cycle probably induces conformational changes in the client proteins, thereby causing their activation. Interacts dynamically with various co-chaperones that modulate its substrate recognition, ATPase cycle and chaperone function. Engages with a range of client protein classes via its interaction with various co-chaperone proteins or complexes, that act as adapters, simultaneously able to interact with the specific client and the central chaperone itself. Recruitment of ATP and co-chaperone followed by client protein forms a functional chaperone. After the completion of the chaperoning process, properly folded client protein and co-chaperone leave HSP90 in an ADP-bound partially open conformation and finally, ADP is released from HSP90 which acquires an open conformation for the next cycle. Plays a critical role in mitochondrial import, delivers preproteins to the mitochondrial import receptor TOMM70. Apart from its chaperone activity, it also plays a role in the regulation of the transcription machinery. HSP90 and its co-chaperones modulate transcription at least at three different levels. In the first place, they alter the steady-state levels of certain transcription factors in response to various physiological cues. Second, they modulate the activity of certain epigenetic modifiers, such as histone deacetylases or DNA methyl transferases, and thereby respond to the change in the environment. Third, they participate in the eviction of histones from the promoter region of certain genes and thereby turn on gene expression. Binds bacterial lipopolysaccharide (LPS) and mediates LPS-induced inflammatory response, including TNF secretion by monocytes. Antagonizes STUB1-mediated inhibition of TGF-beta signaling via inhibition of STUB1-mediated SMAD3 ubiquitination and degradation. Mediates the association of TOMM70 with IRF3 or TBK1 in mitochondrial outer membrane which promotes host antiviral response. This Oryctolagus cuniculus (Rabbit) protein is Heat shock protein HSP 90-alpha (HSP90AA1).